A 362-amino-acid chain; its full sequence is D-alanine--D-alanine ligase (362 aa).

The ATP-grasp domain maps to 153-357 (KKIAREAGIP…YADLLTTLVS (205 aa)). 180 to 235 (RELLGLPVFVKPARGGSSIGISKVDSWRDLPAAIEEAASHDPKVIIEAMITGPEVE) is a binding site for ATP. Residues aspartate 312, glutamate 324, and asparagine 326 each contribute to the Mg(2+) site.

It belongs to the D-alanine--D-alanine ligase family. Mg(2+) is required as a cofactor. Requires Mn(2+) as cofactor.

It localises to the cytoplasm. The catalysed reaction is 2 D-alanine + ATP = D-alanyl-D-alanine + ADP + phosphate + H(+). It participates in cell wall biogenesis; peptidoglycan biosynthesis. Functionally, cell wall formation. The protein is D-alanine--D-alanine ligase of Corynebacterium urealyticum (strain ATCC 43042 / DSM 7109).